Consider the following 290-residue polypeptide: 4-hydroxybenzoate octaprenyltransferase (290 aa).

A run of 8 helical transmembrane segments spans residues 23 to 43 (IGTL…GKGV), 46 to 66 (LSIL…GCVV), 99 to 119 (LFVV…AMTI), 141 to 161 (LPQF…YAAV), 170 to 190 (WLLL…YAMV), 213 to 233 (LIVG…GYLT), 234 to 254 (QMSG…IHQQ), and 268 to 288 (AFMD…LSYW).

This sequence belongs to the UbiA prenyltransferase family. The cofactor is Mg(2+).

It localises to the cell inner membrane. It catalyses the reaction all-trans-octaprenyl diphosphate + 4-hydroxybenzoate = 4-hydroxy-3-(all-trans-octaprenyl)benzoate + diphosphate. Its pathway is cofactor biosynthesis; ubiquinone biosynthesis. Catalyzes the prenylation of para-hydroxybenzoate (PHB) with an all-trans polyprenyl group. Mediates the second step in the final reaction sequence of ubiquinone-8 (UQ-8) biosynthesis, which is the condensation of the polyisoprenoid side chain with PHB, generating the first membrane-bound Q intermediate 3-octaprenyl-4-hydroxybenzoate. In Serratia proteamaculans (strain 568), this protein is 4-hydroxybenzoate octaprenyltransferase.